A 258-amino-acid chain; its full sequence is Phosphate import ATP-binding protein PstB (258 aa).

The region spanning 5-247 is the ABC transporter domain; sequence LDLKDVNIYY…EKIFSNPRQK (243 aa). 37 to 44 serves as a coordination point for ATP; that stretch reads GPSGCGKS.

Belongs to the ABC transporter superfamily. Phosphate importer (TC 3.A.1.7) family. As to quaternary structure, the complex is composed of two ATP-binding proteins (PstB), two transmembrane proteins (PstC and PstA) and a solute-binding protein (PstS).

The protein localises to the cell membrane. The enzyme catalyses phosphate(out) + ATP + H2O = ADP + 2 phosphate(in) + H(+). In terms of biological role, part of the ABC transporter complex PstSACB involved in phosphate import. Responsible for energy coupling to the transport system. In Mycolicibacterium smegmatis (Mycobacterium smegmatis), this protein is Phosphate import ATP-binding protein PstB.